Reading from the N-terminus, the 177-residue chain is Large ribosomal subunit protein uL6 (177 aa).

Belongs to the universal ribosomal protein uL6 family. Part of the 50S ribosomal subunit.

In terms of biological role, this protein binds to the 23S rRNA, and is important in its secondary structure. It is located near the subunit interface in the base of the L7/L12 stalk, and near the tRNA binding site of the peptidyltransferase center. In Sodalis glossinidius (strain morsitans), this protein is Large ribosomal subunit protein uL6.